Here is a 1079-residue protein sequence, read N- to C-terminus: Electrogenic sodium bicarbonate cotransporter 1 (1079 aa).

The interval 1–62 (MEDEAVLDRG…EKREKERISE (62 aa)) is required for interaction with AHCYL1. The Cytoplasmic portion of the chain corresponds to 1–466 (MEDEAVLDRG…FASDFYDALN (466 aa)). Tyrosine 30 is modified (phosphotyrosine). Residues 39–52 (YRRRRRHKRKTGHK) are compositionally biased toward basic residues. A disordered region spans residues 39-78 (YRRRRRHKRKTGHKEKREKERISENYSDKSDVENADESSS). Threonine 49 is subject to Phosphothreonine; by PKA. Residues 53–70 (EKREKERISENYSDKSDV) are compositionally biased toward basic and acidic residues. Residues serine 61, serine 65, serine 68, serine 223, serine 232, serine 233, and serine 245 each carry the phosphoserine modification. A disordered region spans residues 237–265 (MFTSPDNGSPAMTHRNLTSSSLNDISDKP). A phosphothreonine mark is found at threonine 249 and threonine 254. Residues 251-260 (RNLTSSSLND) show a composition bias toward polar residues. Phosphoserine is present on residues serine 256, serine 257, and serine 262. A helical membrane pass occupies residues 467–491 (IQSLSAILFIYLATVTNAITFGGLL). Over 492 to 501 (GDATDNMQGV) the chain is Extracellular. A helical transmembrane segment spans residues 502 to 520 (LESFLGTAVSGAIFCLFAG). Position 521 (glutamine 521) is a topological domain, cytoplasmic. Residues 522–542 (PLTILSSTGPVLVFERLLFNF) traverse the membrane as a discontinuously helical segment. Residues 543 to 550 (SKDHNFDY) are Extracellular-facing. The helical transmembrane segment at 551–571 (LEFRLWIGLWSAFLCLILVAT) threads the bilayer. The Cytoplasmic portion of the chain corresponds to 572–585 (DASFLVQYFTRFTE). Residues 586 to 609 (EGFSSLISFIFIYDAFKKMIKLAD) traverse the membrane as a helical segment. At 610–692 (YYPINSDFKV…GNNCNFVPDV (83 aa)) the chain is on the extracellular side. A helical transmembrane segment spans residues 693 to 710 (TLMSFILFLGTYTSSMAL). At 711–725 (KKFKTSRYFPTTARK) the chain is on the cytoplasmic side. The helical transmembrane segment at 726 to 745 (LISDFAIILSILIFCVIDAL) threads the bilayer. Topologically, residues 746 to 779 (VGVDTPKLIVPSEFKPTSPNRGWFVPPFGGNPWW) are extracellular. The tract at residues 748–779 (VDTPKLIVPSEFKPTSPNRGWFVPPFGGNPWW) is interaction with CA4. Residues 780-807 (VYLAAAIPALLVTILIFMDQQITAVIVN) form a helical membrane-spanning segment. Over 808–819 (RKEHKLKKGAGY) the chain is Cytoplasmic. A helical transmembrane segment spans residues 820–836 (HLDLFWVAILMVVCSFM). Position 837 (alanine 837) is a topological domain, extracellular. Residues 838-855 (LPWYVAATVISIAHIDSL) form a discontinuously helical membrane-spanning segment. Residues 856–877 (KMETETSAPGEQPKFLGVREQR) lie on the Cytoplasmic side of the membrane. A helical membrane pass occupies residues 878–894 (VTGTLVFILTGLSVFMA). Over 895–901 (PILKFIP) the chain is Extracellular. A helical transmembrane segment spans residues 902-918 (MPVLYGVFLYMGVASLN). The Cytoplasmic segment spans residues 919 to 960 (GVQFMDRLKLLLMPLKHQPDFIYLRHVPLRRVHLFTFLQVLC). The discontinuously helical intramembrane region spans 961–986 (LALLWILKSTVAAIIFPVMILALVAV). At 987–1079 (RKGMDYLFSQ…STFLERHTSC (93 aa)) the chain is on the cytoplasmic side. Residues 1002 to 1004 (LDD) form a CA2-binding region. Residues 1012–1079 (KKKEDEKKKK…STFLERHTSC (68 aa)) form a disordered region. The residue at position 1026 (serine 1026) is a Phosphoserine; by PKA. The residue at position 1029 (serine 1029) is a Phosphoserine. The tract at residues 1030–1033 (DNDD) is CA2-binding. Residues serine 1034 and serine 1044 each carry the phosphoserine modification. Residues 1057–1059 (FLS) form a required for basolateral targeting region. Positions 1062 to 1079 (KPSDREKSSTFLERHTSC) are enriched in basic and acidic residues. Serine 1069 carries the post-translational modification Phosphoserine.

This sequence belongs to the anion exchanger (TC 2.A.31) family. As to quaternary structure, homodimer. Interacts with CA2/carbonic anhydrase 2 and CA4/carbonic anhydrase 4 which may regulate transporter activity. Isoform 1 but not isoform 2 interacts with AHCYL1 (via PEST domain when phosphorylated); the interaction increases SLC4A4 isoform 1 activity. Interacts with AHCYL2. In terms of processing, phosphorylation of Ser-1026 by PKA increases the binding of CA2 and changes the Na(+):HCO3(-) stoichiometry of the transporter from 3:1 to 2:1. Phosphorylated in presence of STK39 and dephosphorylated in presence of PP1 phosphatase; phosphorylation seems to inhibit SLC4A4 activity. Post-translationally, N-glycosylated. May not be necessary for the transporter basic functions. As to expression, expressed in colonic mucosa, kidney cortex and to gastric mucosa.

The protein localises to the basolateral cell membrane. It is found in the cell membrane. It carries out the reaction 2 hydrogencarbonate(out) + Na(+)(out) = 2 hydrogencarbonate(in) + Na(+)(in). It catalyses the reaction 3 hydrogencarbonate(out) + Na(+)(out) = 3 hydrogencarbonate(in) + Na(+)(in). Functionally, electrogenic sodium/bicarbonate cotransporter with a Na(+):HCO3(-) stoichiometry varying from 1:2 to 1:3. May regulate bicarbonate influx/efflux at the basolateral membrane of cells and regulate intracellular pH. This is Electrogenic sodium bicarbonate cotransporter 1 (SLC4A4) from Oryctolagus cuniculus (Rabbit).